We begin with the raw amino-acid sequence, 347 residues long: 3-isopropylmalate dehydrogenase (347 aa).

Residues R94, R104, R128, and D219 each contribute to the substrate site. Mg(2+) is bound by residues D219, D243, and D247. Position 279-291 (279-291) interacts with NAD(+); sequence GSAPDIAGQGKAD.

Belongs to the isocitrate and isopropylmalate dehydrogenases family. LeuB type 2 subfamily. In terms of assembly, homodimer. Mg(2+) is required as a cofactor. The cofactor is Mn(2+).

Its subcellular location is the cytoplasm. The enzyme catalyses (2R,3S)-3-isopropylmalate + NAD(+) = 4-methyl-2-oxopentanoate + CO2 + NADH. It participates in amino-acid biosynthesis; L-leucine biosynthesis; L-leucine from 3-methyl-2-oxobutanoate: step 3/4. Catalyzes the oxidation of 3-carboxy-2-hydroxy-4-methylpentanoate (3-isopropylmalate) to 3-carboxy-4-methyl-2-oxopentanoate. The product decarboxylates to 4-methyl-2 oxopentanoate. The polypeptide is 3-isopropylmalate dehydrogenase (Streptomyces griseus subsp. griseus (strain JCM 4626 / CBS 651.72 / NBRC 13350 / KCC S-0626 / ISP 5235)).